The following is an 875-amino-acid chain: Kelch-like protein 29 (875 aa).

Positions 115 to 126 (WGQTPINQSTPW) are enriched in polar residues. Disordered stretches follow at residues 115–145 (WGQT…PGTG) and 248–291 (GPTA…DSAH). The span at 131 to 140 (PPSKQMRESD) shows a compositional bias: basic and acidic residues. The BTB domain occupies 329–401 (TDLKIVVEGR…VYTGSLVIDS (73 aa)). 6 Kelch repeats span residues 585–635 (VIVL…VSAG), 637–683 (NIYL…VYDG), 684–730 (KIYT…VCGG), 732–778 (IYVF…TLNG), 779–821 (FVFI…VLDG), and 822–870 (KIYA…VIKK).

The chain is Kelch-like protein 29 (KLHL29) from Homo sapiens (Human).